The sequence spans 229 residues: RNA pyrophosphohydrolase (229 aa).

Residues 6–149 enclose the Nudix hydrolase domain; sequence GFRPNVGIIL…KRGVYEMALT (144 aa). Residues 38 to 59 carry the Nudix box motif; sequence GGIDRGETPEQAMFRELHEEVG. The segment at 168-229 is disordered; it reads SGMRPREAHE…QVLHPDPGKA (62 aa).

It belongs to the Nudix hydrolase family. RppH subfamily. It depends on a divalent metal cation as a cofactor.

In terms of biological role, accelerates the degradation of transcripts by removing pyrophosphate from the 5'-end of triphosphorylated RNA, leading to a more labile monophosphorylated state that can stimulate subsequent ribonuclease cleavage. The sequence is that of RNA pyrophosphohydrolase from Delftia acidovorans (strain DSM 14801 / SPH-1).